The sequence spans 69 residues: Large ribosomal subunit protein bL31 (69 aa).

Belongs to the bacterial ribosomal protein bL31 family. Type A subfamily. Part of the 50S ribosomal subunit.

Its function is as follows. Binds the 23S rRNA. This is Large ribosomal subunit protein bL31 from Mycoplasmopsis pulmonis (strain UAB CTIP) (Mycoplasma pulmonis).